The sequence spans 272 residues: sn-1 stearoyl-lipid 9-desaturase (272 aa).

2 helical membrane-spanning segments follow: residues 11 to 31 and 39 to 59; these read INWV…FAFI and AVGV…TLGF. A Histidine box-1 motif is present at residues 60–65; that stretch reads HRLVTH. The short motif at 97–101 is the Histidine box-2 element; it reads HRIHH. The chain crosses the membrane as a helical span at residues 160-180; the sequence is IALGLLLLYLGGWSFVVWGVF. Positions 230-234 match the Histidine box-3 motif; it reads HHAFQ.

Belongs to the fatty acid desaturase type 2 family. The cofactor is Fe(2+).

It localises to the membrane. It carries out the reaction a 1-octadecanoyl 2-acyl-glycerolipid + 2 reduced [2Fe-2S]-[ferredoxin] + O2 + 2 H(+) = a 1-[(9Z)-octadecenoyl]-2-acyl-glycerolipid + 2 oxidized [2Fe-2S]-[ferredoxin] + 2 H2O. It functions in the pathway lipid metabolism; polyunsaturated fatty acid biosynthesis. Its function is as follows. Desaturase involved in fatty acid biosynthesis. Introduces a double bond at carbon 9 of stearoyl groups (18:0) attached to the sn-1 position of the glycerol moiety of membrane glycerolipids. Does not desaturate palmitic acid (16:0), palmitoleic acid (16:1) and cis-vaccenic acid (18:1). In Anabaena variabilis, this protein is sn-1 stearoyl-lipid 9-desaturase.